The chain runs to 338 residues: Aspartate carbamoyltransferase catalytic subunit (338 aa).

Carbamoyl phosphate contacts are provided by arginine 59 and threonine 60. L-aspartate is bound at residue lysine 87. The carbamoyl phosphate site is built by arginine 109, histidine 142, and glutamine 145. L-aspartate is bound by residues arginine 182 and arginine 253. Glycine 294 and proline 295 together coordinate carbamoyl phosphate.

This sequence belongs to the aspartate/ornithine carbamoyltransferase superfamily. ATCase family. In terms of assembly, heterododecamer (2C3:3R2) of six catalytic PyrB chains organized as two trimers (C3), and six regulatory PyrI chains organized as three dimers (R2).

It carries out the reaction carbamoyl phosphate + L-aspartate = N-carbamoyl-L-aspartate + phosphate + H(+). It functions in the pathway pyrimidine metabolism; UMP biosynthesis via de novo pathway; (S)-dihydroorotate from bicarbonate: step 2/3. Catalyzes the condensation of carbamoyl phosphate and aspartate to form carbamoyl aspartate and inorganic phosphate, the committed step in the de novo pyrimidine nucleotide biosynthesis pathway. This is Aspartate carbamoyltransferase catalytic subunit from Prochlorococcus marinus (strain MIT 9515).